The sequence spans 306 residues: Curved DNA-binding protein (306 aa).

The 65-residue stretch at 5 to 69 (DYYAIMGVKP…QRRAEYDQLW (65 aa)) folds into the J domain.

The protein localises to the cytoplasm. It is found in the nucleoid. In terms of biological role, DNA-binding protein that preferentially recognizes a curved DNA sequence. It is probably a functional analog of DnaJ; displays overlapping activities with DnaJ, but functions under different conditions, probably acting as a molecular chaperone in an adaptive response to environmental stresses other than heat shock. Lacks autonomous chaperone activity; binds native substrates and targets them for recognition by DnaK. Its activity is inhibited by the binding of CbpM. This is Curved DNA-binding protein from Salmonella arizonae (strain ATCC BAA-731 / CDC346-86 / RSK2980).